A 431-amino-acid chain; its full sequence is Enolase (431 aa).

A (2R)-2-phosphoglycerate-binding site is contributed by glutamine 167. Residue glutamate 209 is the Proton donor of the active site. Mg(2+) is bound by residues aspartate 246, glutamate 289, and aspartate 316. The (2R)-2-phosphoglycerate site is built by lysine 341, arginine 370, serine 371, and lysine 392. Lysine 341 serves as the catalytic Proton acceptor.

Belongs to the enolase family. As to quaternary structure, component of the RNA degradosome, a multiprotein complex involved in RNA processing and mRNA degradation. Requires Mg(2+) as cofactor.

It localises to the cytoplasm. The protein resides in the secreted. It is found in the cell surface. It carries out the reaction (2R)-2-phosphoglycerate = phosphoenolpyruvate + H2O. The protein operates within carbohydrate degradation; glycolysis; pyruvate from D-glyceraldehyde 3-phosphate: step 4/5. In terms of biological role, catalyzes the reversible conversion of 2-phosphoglycerate (2-PG) into phosphoenolpyruvate (PEP). It is essential for the degradation of carbohydrates via glycolysis. The protein is Enolase of Shewanella halifaxensis (strain HAW-EB4).